We begin with the raw amino-acid sequence, 549 residues long: SET and MYND domain-containing protein DDB_G0277331 (549 aa).

Residues Lys27–Ser283 form the SET domain. The Zn(2+) site is built by Cys71, Cys74, Cys90, Cys93, Cys99, Cys103, His111, and Cys115. The MYND-type zinc finger occupies Cys71–Cys115. Positions Asn340–Ser401 form a coiled coil.

The protein belongs to the class V-like SAM-binding methyltransferase superfamily.

In terms of biological role, probable methyltransferase. The protein is SET and MYND domain-containing protein DDB_G0277331 of Dictyostelium discoideum (Social amoeba).